A 176-amino-acid chain; its full sequence is Protein tyrosine phosphatase PRL-1 (176 aa).

The Tyrosine-protein phosphatase domain maps to 13–165 (GESDAVVFRF…YKPRHQEGNE (153 aa)). Residues C52 and C107 are joined by a disulfide bond. The Proton donor role is filled by D75. Catalysis depends on C107, which acts as the Phosphocysteine intermediate. A substrate-binding site is contributed by 109–113 (AGLGR). C173 is modified (cysteine methyl ester). C173 is lipidated: S-farnesyl cysteine. A propeptide spans 174 to 176 (AVM) (removed in mature form).

It belongs to the protein-tyrosine phosphatase family.

It is found in the flagellar pocket. The catalysed reaction is O-phospho-L-tyrosyl-[protein] + H2O = L-tyrosyl-[protein] + phosphate. Activated in a reduced environment which promotes the reduction of the disulfide bond between the regulatory Cys-52 and the catalytic Cys-107 residues. Inhibited by sodium orthovanadate. Its function is as follows. Has protein tyrosine phosphatase activity. In Trypanosoma cruzi (strain CL Brener), this protein is Protein tyrosine phosphatase PRL-1.